The primary structure comprises 207 residues: Interleukin-6 (207 aa).

A signal peptide spans 1-18 (MKFFSIASLGLLLVVATA). Positions 26 to 47 (REDGENSVTRNKPTRASSGKTR) are disordered. Positions 31-44 (NSVTRNKPTRASSG) are enriched in polar residues. A disulfide bond links Cys-65 and Cys-71. Ser-74 bears the Phosphoserine mark. A disulfide bridge links Cys-94 with Cys-104.

It belongs to the IL-6 superfamily. As to quaternary structure, component of a hexamer of two molecules each of IL6, IL6R and IL6ST; first binds to IL6R to associate with the signaling subunit IL6ST. Interacts with IL6R (via the N-terminal ectodomain); this interaction may be affected by IL6R-binding with SORL1, hence decreasing IL6 cis signaling. Interacts with SORL1 (via the N-terminal ectodomain); this interaction leads to IL6 internalization and lysosomal degradation. May form a trimeric complex with the soluble SORL1 ectodomain and soluble IL6R receptor; this interaction might stabilize circulating IL6, hence promoting IL6 trans signaling.

It is found in the secreted. Cytokine with a wide variety of biological functions in immunity, tissue regeneration, and metabolism. Binds to IL6R, then the complex associates to the signaling subunit IL6ST/gp130 to trigger the intracellular IL6-signaling pathway. The interaction with the membrane-bound IL6R and IL6ST stimulates 'classic signaling', whereas the binding of IL6 and soluble IL6R to IL6ST stimulates 'trans-signaling'. Alternatively, 'cluster signaling' occurs when membrane-bound IL6:IL6R complexes on transmitter cells activate IL6ST receptors on neighboring receiver cells. Its function is as follows. IL6 is a potent inducer of the acute phase response. Rapid production of IL6 contributes to host defense during infection and tissue injury, but excessive IL6 synthesis is involved in disease pathology. In the innate immune response, is synthesized by myeloid cells, such as macrophages and dendritic cells, upon recognition of pathogens through toll-like receptors (TLRs) at the site of infection or tissue injury. In the adaptive immune response, is required for the differentiation of B cells into immunoglobulin-secreting cells. Plays a major role in the differentiation of CD4(+) T cell subsets. Essential factor for the development of T follicular helper (Tfh) cells that are required for the induction of germinal-center formation. Required to drive naive CD4(+) T cells to the Th17 lineage. Also required for proliferation of myeloma cells and the survival of plasmablast cells. In terms of biological role, acts as an essential factor in bone homeostasis and on vessels directly or indirectly by induction of VEGF, resulting in increased angiogenesis activity and vascular permeability. Induces, through 'trans-signaling' and synergistically with IL1B and TNF, the production of VEGF. Involved in metabolic controls, is discharged into the bloodstream after muscle contraction increasing lipolysis and improving insulin resistance. 'Trans-signaling' in central nervous system also regulates energy and glucose homeostasis. Mediates, through GLP-1, crosstalk between insulin-sensitive tissues, intestinal L cells and pancreatic islets to adapt to changes in insulin demand. Also acts as a myokine. Plays a protective role during liver injury, being required for maintenance of tissue regeneration. Also has a pivotal role in iron metabolism by regulating HAMP/hepcidin expression upon inflammation or bacterial infection. Through activation of IL6ST-YAP-NOTCH pathway, induces inflammation-induced epithelial regeneration. This Marmota monax (Woodchuck) protein is Interleukin-6 (IL6).